Consider the following 259-residue polypeptide: DNA repair protein RecO (259 aa).

Belongs to the RecO family.

Involved in DNA repair and RecF pathway recombination. The polypeptide is DNA repair protein RecO (Rhizobium rhizogenes (strain K84 / ATCC BAA-868) (Agrobacterium radiobacter)).